We begin with the raw amino-acid sequence, 445 residues long: Phosphoglucosamine mutase (445 aa).

The active-site Phosphoserine intermediate is Ser-102. The Mg(2+) site is built by Ser-102, Asp-241, Asp-243, and Asp-245. Ser-102 carries the post-translational modification Phosphoserine.

Belongs to the phosphohexose mutase family. Requires Mg(2+) as cofactor. Activated by phosphorylation.

It catalyses the reaction alpha-D-glucosamine 1-phosphate = D-glucosamine 6-phosphate. Its function is as follows. Catalyzes the conversion of glucosamine-6-phosphate to glucosamine-1-phosphate. This is Phosphoglucosamine mutase from Escherichia coli O81 (strain ED1a).